Here is a 510-residue protein sequence, read N- to C-terminus: Tryptophan 6-hydroxylase fscE (510 aa).

The helical transmembrane segment at 11–31 (LLPIEGVIILVFVLSCFSLAI) threads the bilayer. Cysteine 452 serves as a coordination point for heme.

Belongs to the cytochrome P450 family. It depends on heme as a cofactor.

It localises to the membrane. Its pathway is secondary metabolite biosynthesis. Tryptophan 6-hydroxylase; part of the fragmented gene cluster that mediates the biosynthesis of fusarochromene, a tryptophan-derived metabolite closely related to a group of mycotoxins including fusarochromanone. Within the pathway, fscE hydroxalates the first intermediate D-tryptophan to yield 6-hydroxytryptophan. The first step of the pathway is the epimerization of L-tryptophan to D-tryptophan in the presence of the NRPS-like tryptophan epimerase fscC. D-tryptophan is subsequently hydroxylated by the tryptophan 6-hydroxylase fscE to yield 6-hydroxytryptophan. The pyrrole ring undergoes cleavaged by the tryptophan 2,3-dioxygenase fscD and is finally converted to 4-hydroxykyrunenine by the hydrolase fscH. The NRPS-like oxidoreductase fscA reduces the carboxyl group to primary alcohol and the DMATS-type prenyltransferase fscG performs prenylation, followed by the formation of a chromene ring catalyzed by the oxidoreductase fscI, which leads to desacetylfusarochromene. Epoxidation by fscF and rearrangement reactions of chromene double bonds convert compound desacetylfusarochromene to fusarochromanones. Although specific acetyltransferases were not found near the fsc gene cluster, several predicted enzymes containing the N-acetyltransferase superfamily domain are present in the genome of F.equiseti. These predicted enzymes may have the potential to convert desacetylfusarochromene to fusarochromene. In Fusarium equiseti (Fusarium scirpi), this protein is Tryptophan 6-hydroxylase fscE.